Consider the following 313-residue polypeptide: Proline iminopeptidase (313 aa).

An AB hydrolase-1 domain is found at 35-298; sequence KPVVILHGGP…TPGAGHSAFE (264 aa). S110 functions as the Nucleophile in the catalytic mechanism. Residue D266 is part of the active site. H294 functions as the Proton donor in the catalytic mechanism.

This sequence belongs to the peptidase S33 family.

It is found in the cytoplasm. It catalyses the reaction Release of N-terminal proline from a peptide.. Specifically catalyzes the removal of N-terminal proline residues from peptides. The chain is Proline iminopeptidase (pip) from Xylella fastidiosa (strain Temecula1 / ATCC 700964).